Consider the following 434-residue polypeptide: D-amino acid dehydrogenase (434 aa).

3-17 (VVILGSGVVGVTSAW) is an FAD binding site.

The protein belongs to the DadA oxidoreductase family. The cofactor is FAD.

The catalysed reaction is a D-alpha-amino acid + A + H2O = a 2-oxocarboxylate + AH2 + NH4(+). It functions in the pathway amino-acid degradation; D-alanine degradation; NH(3) and pyruvate from D-alanine: step 1/1. Functionally, oxidative deamination of D-amino acids. This chain is D-amino acid dehydrogenase, found in Yersinia pseudotuberculosis serotype O:3 (strain YPIII).